The chain runs to 224 residues: Cysteine S-methyltransferase NleE (224 aa).

Residues 49–52 (GITR) are interaction with host proteins TAB2, TAB3 and ZRANB3. S-adenosyl-L-methionine-binding residues include A92, S98, R107, Q111, Y204, and E208.

The protein belongs to the NleE/OspZ family. In terms of assembly, monomer.

It localises to the secreted. Its subcellular location is the host nucleus. The catalysed reaction is L-cysteinyl-[protein] + S-adenosyl-L-methionine = S-methyl-L-cysteinyl-[protein] + S-adenosyl-L-homocysteine + H(+). Its function is as follows. Cysteine methyltransferase effector that inhibits host cell NF-kappa-B activation by preventing nuclear translocation of host protein RELA/p65. Acts by mediating cysteine methylation of host proteins TAB2 and TAB3: methylation of a conserved cysteine residue of the RanBP2-type zinc finger (NZF) of TAB2 and TAB3 disrupts zinc-binding, thereby inactivating the ubiquitin chain-binding activity of TAB2 and TAB3, leading to NF-kappa-B inactivation. Also mediates cysteine methylation of host protein ZRANB3, inactivating its ability to bind ubiquitin chains. This is Cysteine S-methyltransferase NleE from Escherichia coli O157:H7.